A 540-amino-acid chain; its full sequence is Probable G-protein coupled receptor 75 (540 aa).

The span at 1-15 shows a compositional bias: polar residues; that stretch reads MNSTGHLQDAPNATS. Residues 1–27 are disordered; that stretch reads MNSTGHLQDAPNATSLHVPHSQEGNST. Residues 1-46 are Extracellular-facing; it reads MNSTGHLQDAPNATSLHVPHSQEGNSTSLQEGLQDLIHTATLVTCT. 3 N-linked (GlcNAc...) asparagine glycosylation sites follow: asparagine 2, asparagine 12, and asparagine 25. Residues 47–67 form a helical membrane-spanning segment; the sequence is FLLAVIFCLGSYGNFIVFLSF. Residues 68 to 86 lie on the Cytoplasmic side of the membrane; that stretch reads FDPAFRKFRTNFDFMILNL. Residues 87-107 traverse the membrane as a helical segment; the sequence is SFCDLFICGVTAPMFTFVLFF. Residues 108 to 120 are Extracellular-facing; sequence SSASSIPDAFCFT. The helical transmembrane segment at 121 to 141 threads the bilayer; the sequence is FHLTSSGFIIMSLKTVAVIAL. Topologically, residues 142 to 160 are cytoplasmic; the sequence is HRLRMVLGKQPNRTASFPC. Residues 161 to 181 form a helical membrane-spanning segment; it reads TVLLTLLLWATSFTLATLATL. Over 182–205 the chain is Extracellular; the sequence is KTSKSHLCLPMSSLIAGKGKAILS. Residues 206 to 226 traverse the membrane as a helical segment; it reads LYVVDFTFCVAVVSVSYIMIA. The Cytoplasmic portion of the chain corresponds to 227 to 318; it reads QTLRKNAQVR…INLSTAKDSK (92 aa). The helical transmembrane segment at 319–339 threads the bilayer; that stretch reads AVVTCVIIVLSVLVCCLPLGI. Residues 340–350 lie on the Extracellular side of the membrane; that stretch reads SLVQVVLSSNG. A helical membrane pass occupies residues 351-371; it reads SFILYQFELFGFTLIFFKSGL. Residues 372–540 lie on the Cytoplasmic side of the membrane; sequence NPFIYSRNSA…SAKQIPVPSV (169 aa).

Belongs to the G-protein coupled receptor 1 family. In terms of tissue distribution, expressed at high levels in brain and spinal cord and at detectable levels in retinal pigment epithelium. In situ hybridization of adult eye sections localized transcripts only to the perivascular cells, surrounding retinal arterioles, in the ganglion cell/nerve fiber layer. Also expressed by islet cells (at protein level).

It localises to the cell membrane. Functionally, g protein-coupled receptor that is activated by the chemokine CCL5/RANTES. Probably coupled to heterotrimeric Gq proteins, it stimulates inositol trisphosphate production and calcium mobilization upon activation. Together with CCL5/RANTES, may play a role in neuron survival through activation of a downstream signaling pathway involving the PI3, Akt and MAP kinases. CCL5/RANTES may also regulate insulin secretion by pancreatic islet cells through activation of this receptor. This is Probable G-protein coupled receptor 75 (GPR75) from Homo sapiens (Human).